A 248-amino-acid chain; its full sequence is tRNA (guanine-N(1)-)-methyltransferase (248 aa).

S-adenosyl-L-methionine contacts are provided by residues Gly-113 and 133 to 138; that span reads IGDFVL.

Belongs to the RNA methyltransferase TrmD family. Homodimer.

Its subcellular location is the cytoplasm. It carries out the reaction guanosine(37) in tRNA + S-adenosyl-L-methionine = N(1)-methylguanosine(37) in tRNA + S-adenosyl-L-homocysteine + H(+). Specifically methylates guanosine-37 in various tRNAs. This chain is tRNA (guanine-N(1)-)-methyltransferase, found in Dehalococcoides mccartyi (strain CBDB1).